An 85-amino-acid polypeptide reads, in one-letter code: Large ribosomal subunit protein bL31 (85 aa).

Residues 65-85 (YGMGGAGKAGEDKKAGDKADA) form a disordered region. Residues 73-85 (AGEDKKAGDKADA) show a composition bias toward basic and acidic residues.

The protein belongs to the bacterial ribosomal protein bL31 family. Type A subfamily. In terms of assembly, part of the 50S ribosomal subunit.

In terms of biological role, binds the 23S rRNA. This is Large ribosomal subunit protein bL31 from Synechococcus sp. (strain WH7803).